The sequence spans 150 residues: Ribosomal RNA large subunit methyltransferase H (150 aa).

S-adenosyl-L-methionine-binding positions include Ile-71, Ala-100, and 118–123 (LSEMTF).

This sequence belongs to the RNA methyltransferase RlmH family. In terms of assembly, homodimer.

It is found in the cytoplasm. The enzyme catalyses pseudouridine(1915) in 23S rRNA + S-adenosyl-L-methionine = N(3)-methylpseudouridine(1915) in 23S rRNA + S-adenosyl-L-homocysteine + H(+). Its function is as follows. Specifically methylates the pseudouridine at position 1915 (m3Psi1915) in 23S rRNA. This chain is Ribosomal RNA large subunit methyltransferase H, found in Helicobacter acinonychis (strain Sheeba).